Here is a 336-residue protein sequence, read N- to C-terminus: Biotin synthase (336 aa).

The region spanning 52 to 279 (KAIQLSTLMS…KSYVRLSAGR (228 aa)) is the Radical SAM core domain. [4Fe-4S] cluster is bound by residues C67, C71, and C74. The [2Fe-2S] cluster site is built by C111, C142, C202, and R274.

It belongs to the radical SAM superfamily. Biotin synthase family. As to quaternary structure, homodimer. The cofactor is [4Fe-4S] cluster. It depends on [2Fe-2S] cluster as a cofactor.

The catalysed reaction is (4R,5S)-dethiobiotin + (sulfur carrier)-SH + 2 reduced [2Fe-2S]-[ferredoxin] + 2 S-adenosyl-L-methionine = (sulfur carrier)-H + biotin + 2 5'-deoxyadenosine + 2 L-methionine + 2 oxidized [2Fe-2S]-[ferredoxin]. The protein operates within cofactor biosynthesis; biotin biosynthesis; biotin from 7,8-diaminononanoate: step 2/2. Catalyzes the conversion of dethiobiotin (DTB) to biotin by the insertion of a sulfur atom into dethiobiotin via a radical-based mechanism. This is Biotin synthase from Pasteurella multocida (strain Pm70).